We begin with the raw amino-acid sequence, 308 residues long: uncharacterized protein (308 aa).

This is an uncharacterized protein from Bacillus subtilis (strain 168).